A 528-amino-acid chain; its full sequence is Galactokinase (528 aa).

Residues Arg-53, Glu-59, His-60, and Asp-62 each contribute to the alpha-D-galactose site. ATP contacts are provided by Gly-165, Gly-167, Ser-169, and Ser-170. Residues Asn-213 and Asp-217 each coordinate alpha-D-galactose. Catalysis depends on Asp-217, which acts as the Proton acceptor. 3 residues coordinate ATP: Ser-264, Asn-265, and Lys-266. Alpha-D-galactose is bound at residue Tyr-274. Ser-381 bears the Phosphoserine mark.

Belongs to the GHMP kinase family. GalK subfamily.

It catalyses the reaction alpha-D-galactose + ATP = alpha-D-galactose 1-phosphate + ADP + H(+). The protein operates within carbohydrate metabolism; galactose metabolism. In terms of biological role, galactokinase is a key enzyme in the galactose metabolism where it catalyzes the conversion of alpha-D-galactose to galactose 1-phosphate. Can also induce the transcription of the yeast GAL genes in response to the organism being challenged with galactose as the sole source of carbon. It's striking amino acid sequence similarity to GAL3 might explain its GAL3-like induction activity. The sequence is that of Galactokinase from Saccharomyces cerevisiae (strain ATCC 204508 / S288c) (Baker's yeast).